We begin with the raw amino-acid sequence, 39 residues long: Bacteriocin lactococcin-G subunit alpha (39 aa).

Bacteriocin activity requires interaction of alpha and beta peptides in a molar ratio of 7:1 or 8:1 respectively.

Functionally, kills Lactococci. In Lactococcus lactis subsp. lactis (Streptococcus lactis), this protein is Bacteriocin lactococcin-G subunit alpha.